The following is a 182-amino-acid chain: Lipoprotein signal peptidase (182 aa).

3 helical membrane-spanning segments follow: residues 12–32 (VAVFACVAAAALIVDQLTKAW), 68–88 (ATWVISLLAVVACVALAVAGV), and 91–111 (VSMKWSVAISFAFAGALGNLI). Active-site residues include Asp127 and Asp140. Residues 135-155 (VGNVADIYLVVAGVVLVILIL) form a helical membrane-spanning segment.

It belongs to the peptidase A8 family.

It localises to the cell membrane. It catalyses the reaction Release of signal peptides from bacterial membrane prolipoproteins. Hydrolyzes -Xaa-Yaa-Zaa-|-(S,diacylglyceryl)Cys-, in which Xaa is hydrophobic (preferably Leu), and Yaa (Ala or Ser) and Zaa (Gly or Ala) have small, neutral side chains.. The protein operates within protein modification; lipoprotein biosynthesis (signal peptide cleavage). Functionally, this protein specifically catalyzes the removal of signal peptides from prolipoproteins. The chain is Lipoprotein signal peptidase from Bifidobacterium longum (strain DJO10A).